A 422-amino-acid polypeptide reads, in one-letter code: Secernin-3 (422 aa).

A propeptide spanning residues 1–5 (MEPCS) is cleaved from the precursor. Cys-6 is a catalytic residue. Cys-6 carries the post-translational modification Glyoxylic acid (Cys); alternate. A Pyruvic acid (Cys); alternate modification is found at Cys-6.

It belongs to the peptidase C69 family. Secernin subfamily.

Functionally, plays a role in thermal nociception. The protein is Secernin-3 (SCRN3) of Bos taurus (Bovine).